The following is a 604-amino-acid chain: Matrix metalloproteinase-21 (604 aa).

An N-terminal signal peptide occupies residues 1-22 (MPSIKLLVWCCLCVISPRLCHS). A propeptide spanning residues 23 to 180 (EKLFHSRDRS…PDPPKIRRKR (158 aa)) is cleaved from the precursor. Residues 132-175 (KPRCGVPDNQMAKKETEKPTAAQSLENKTKDSENVTQQNPDPPK) form a disordered region. The Cysteine switch signature appears at 133–140 (PRCGVPDN). Residue Cys135 participates in Zn(2+) binding. N-linked (GlcNAc...) asparagine glycosylation is found at Asn158 and Asn165. Residue His318 participates in Zn(2+) binding. Glu319 is a catalytic residue. Zn(2+) contacts are provided by His322 and His328. Cys364 and Cys595 form a disulfide bridge. Hemopexin repeat units lie at residues 365 to 424 (EGPF…WHGI), 426 to 482 (VQNI…FPGI), 483 to 531 (PSPI…FPAV), and 538 to 594 (KGNI…WFDI). 2 N-linked (GlcNAc...) asparagine glycosylation sites follow: Asn404 and Asn407.

The protein belongs to the peptidase M10A family. Requires Zn(2+) as cofactor. Ca(2+) serves as cofactor. Post-translationally, the precursor is cleaved by a furin endopeptidase.

It localises to the secreted. Functionally, plays a specialized role in the generation of left-right asymmetry during embryogenesis. May act as a negative regulator of the NOTCH-signaling pathway. The protein is Matrix metalloproteinase-21 (mmp21) of Xenopus laevis (African clawed frog).